We begin with the raw amino-acid sequence, 359 residues long: RNA-binding protein 4B (359 aa).

RRM domains follow at residues valine 2 to asparagine 72 and threonine 78 to serine 148. Residues serine 160–valine 177 form a CCHC-type zinc finger. The tract at residues alanine 196 to phenylalanine 359 is interaction with TNPO3.

Interacts with TNPO3, which may mediate nuclear import of the protein.

Its subcellular location is the nucleus. It localises to the nucleolus. Functionally, required for the translational activation of PER1 mRNA in response to circadian clock. Binds directly to the 3'-UTR of the PER1 mRNA. The polypeptide is RNA-binding protein 4B (RBM4B) (Sus scrofa (Pig)).